Here is a 379-residue protein sequence, read N- to C-terminus: Glutamate 5-kinase (379 aa).

Residue Lys-15 participates in ATP binding. Substrate is bound by residues Ser-59, Asp-146, and Asn-158. Residue 178–179 (TD) participates in ATP binding. The 79-residue stretch at 285-363 (RGAVTVDVGA…SEFERLLGYS (79 aa)) folds into the PUA domain.

The protein belongs to the glutamate 5-kinase family.

It is found in the cytoplasm. It catalyses the reaction L-glutamate + ATP = L-glutamyl 5-phosphate + ADP. It functions in the pathway amino-acid biosynthesis; L-proline biosynthesis; L-glutamate 5-semialdehyde from L-glutamate: step 1/2. In terms of biological role, catalyzes the transfer of a phosphate group to glutamate to form L-glutamate 5-phosphate. In Paracidovorax citrulli (strain AAC00-1) (Acidovorax citrulli), this protein is Glutamate 5-kinase.